A 237-amino-acid polypeptide reads, in one-letter code: UPF0053 inner membrane protein YgdQ (237 aa).

Residues 1–17 lie on the Periplasmic side of the membrane; that stretch reads MLFAWITDPNAWLALGT. Residues 18-38 traverse the membrane as a helical segment; sequence LTLLEIVLGIDNIIFLSLVVA. Residues 39 to 50 lie on the Cytoplasmic side of the membrane; that stretch reads KLPTAQRAHARR. A helical membrane pass occupies residues 51–71; it reads LGLAGAMVMRLALLASIAWVT. The Periplasmic portion of the chain corresponds to 72–79; sequence RLTNPLFT. The helical transmembrane segment at 80 to 100 threads the bilayer; it reads IFSQEISARDLILLLGGLFLI. Topologically, residues 101–124 are cytoplasmic; the sequence is WKASKEIHESIEGEEEGLKTRVSS. The helical transmembrane segment at 125 to 145 threads the bilayer; that stretch reads FLGAIVQIMLLDIIFSLDSVI. The Periplasmic portion of the chain corresponds to 146 to 151; the sequence is TAVGLS. A helical membrane pass occupies residues 152 to 172; it reads DHLFIMMAAVVIAVGVMMFAA. Over 173–186 the chain is Cytoplasmic; sequence RSIGDFVERHPSVK. The helical transmembrane segment at 187-207 threads the bilayer; it reads MLALSFLILVGFTLILESFDI. The Periplasmic portion of the chain corresponds to 208 to 209; it reads HV. Residues 210-230 form a helical membrane-spanning segment; it reads PKGYIYFAMFFSIAVESLNLI. At 231–237 the chain is on the cytoplasmic side; it reads RNKKNPL.

The protein belongs to the UPF0053 family.

The protein localises to the cell inner membrane. The chain is UPF0053 inner membrane protein YgdQ (ygdQ) from Escherichia coli O157:H7.